The primary structure comprises 314 residues: Beta-lactamase 2 (314 aa).

Positions 1-26 (MLHTRIRRATLGAVAALSLVPVMACG) are cleaved as a signal peptide. Low complexity predominate over residues 32-47 (DAAEPAGSAPSSSAAA). The segment at 32–51 (DAAEPAGSAPSSSAAAHKPG) is disordered. Serine 96 serves as the catalytic Acyl-ester intermediate. 258-260 (KTG) contacts substrate.

It belongs to the class-A beta-lactamase family.

The enzyme catalyses a beta-lactam + H2O = a substituted beta-amino acid. The polypeptide is Beta-lactamase 2 (blaU) (Streptomyces cacaoi).